The sequence spans 655 residues: MSGDPRSFSFNQGDDHPIDSSQQPLHPTNTMADSYSDRNWGAPGGLDHTHSMRTQSTATPGMDNLGPAAVGGGISGIALGVANSHDRQSGVDAFRDTDGGNFPAERGYNAPGSDNPYVPPPPAAAYDSSDNLTARSGAYGSSAALAAAASAPAGASNTSRRSFVDSPYQGVGALDAGPYQRQSVYNNGDYPLVINPDEIIDDGDDGFALPNSKSAGHKSRAVPAAAAGAAGGAAAGGLLGGIFKSKAAAEGPSYGPVPGAGIEAAEKGQWAKPKPGTGSRKRGWIVGIILAVVIVGAIVGGAVGGTLGNREKESPSSSETASGDEKVNGDLGKDSDEIKSLMNNPNLHKVFPGMDYTPWGTQYPLCQKYPPSQNNVTRDIAVLSQLTNTVRLYGTDCNQTEMVLHAIDRLELTEMKLWLGVWIDTNKTTCERQLNQLYDVLDKTKDHSIFKGAIIGNEALYRAGSSIAEAEKTLISYMTEVRDHFKKNNINIPIATSDLGDNWNAELVKASDVVMANVHPFFAGVSVDLAASWTWDFWNNHNLVLTKGTDKKQIISEVGWPSGGGNDCGDGGNCPNDSAGSVAGIDEMNQFMSDWVCQALDNGTDYFWFEAFDEPWKIVYNTKNENWEDKWGLMDPARNLKDGLKIPDCGGKTAT.

Disordered stretches follow at residues 1-61 (MSGD…ATPG) and 89-114 (SGVDAFRDTDGGNFPAERGYNAPGSD). Residues 1-282 (MSGDPRSFSF…PKPGTGSRKR (282 aa)) lie on the Cytoplasmic side of the membrane. The segment covering 19–33 (DSSQQPLHPTNTMAD) has biased composition (polar residues). Residues 89 to 98 (SGVDAFRDTD) show a composition bias toward basic and acidic residues. Residues 283-303 (GWIVGIILAVVIVGAIVGGAV) form a helical; Signal-anchor for type II membrane protein membrane-spanning segment. Residues 304 to 655 (GGTLGNREKE…IPDCGGKTAT (352 aa)) are Extracellular-facing. The disordered stretch occupies residues 305 to 338 (GTLGNREKESPSSSETASGDEKVNGDLGKDSDEI). A compositionally biased stretch (basic and acidic residues) spans 323-338 (GDEKVNGDLGKDSDEI). N426 carries N-linked (GlcNAc...) asparagine glycosylation. The Proton donor role is filled by E458. Residue E557 is the Nucleophile of the active site. N-linked (GlcNAc...) asparagine glycans are attached at residues N576 and N602.

This sequence belongs to the glycosyl hydrolase 17 family.

The protein resides in the cell membrane. The catalysed reaction is Hydrolysis of (1-&gt;3)-beta-D-glucosidic linkages in (1-&gt;3)-beta-D-glucans.. In terms of biological role, glucanases play a role in cell expansion during growth, in cell-cell fusion during mating, and in spore release during sporulation. This enzyme may be involved in beta-glucan degradation. Active on laminarin and lichenan. This is Probable glucan endo-1,3-beta-glucosidase btgC (btgC) from Aspergillus terreus (strain NIH 2624 / FGSC A1156).